Here is a 54-residue protein sequence, read N- to C-terminus: Large ribosomal subunit protein bL33 (54 aa).

Belongs to the bacterial ribosomal protein bL33 family.

This Frankia alni (strain DSM 45986 / CECT 9034 / ACN14a) protein is Large ribosomal subunit protein bL33.